A 224-amino-acid polypeptide reads, in one-letter code: Myogenin (224 aa).

Phosphoserine; by CaMK2G occurs at positions 77 and 79. Residues D81 to L132 form the bHLH domain. At T87 the chain carries Phosphothreonine; by CaMK2G.

Homodimer and heterodimer with E12; heterodimerization enhances MYOG DNA-binding and transcriptional activities. Interacts with SMARCA4/BRG1/BAF190A. Interacts (via C-terminal region) with SSRP1 and SUPT16H; the interaction is indicative of an interaction with the FACT complex. Interacts with CSRP3. In terms of processing, phosphorylated by CAMK2G on threonine and serine amino acids in a muscle activity-dependent manner. Phosphorylation of Thr-87 impairs both DNA-binding and trans-activation functions in contracting muscles.

Its subcellular location is the nucleus. Acts as a transcriptional activator that promotes transcription of muscle-specific target genes and plays a role in muscle differentiation, cell cycle exit and muscle atrophy. Essential for the development of functional embryonic skeletal fiber muscle differentiation. However is dispensable for postnatal skeletal muscle growth; phosphorylation by CAMK2G inhibits its transcriptional activity in respons to muscle activity. Required for the recruitment of the FACT complex to muscle-specific promoter regions, thus promoting gene expression initiation. During terminal myoblast differentiation, plays a role as a strong activator of transcription at loci with an open chromatin structure previously initiated by MYOD1. Together with MYF5 and MYOD1, co-occupies muscle-specific gene promoter core regions during myogenesis. Also cooperates with myocyte-specific enhancer factor MEF2D and BRG1-dependent recruitment of SWI/SNF chromatin-remodeling enzymes to alter chromatin structure at myogenic late gene promoters. Facilitates cell cycle exit during terminal muscle differentiation through the up-regulation of miR-20a expression, which in turn represses genes involved in cell cycle progression. Binds to the E-box containing (E1) promoter region of the miR-20a gene. Also plays a role in preventing reversal of muscle cell differentiation. Contributes to the atrophy-related gene expression in adult denervated muscles. Induces fibroblasts to differentiate into myoblasts. This Homo sapiens (Human) protein is Myogenin (MYOG).